Consider the following 179-residue polypeptide: Deoxyuridine 5'-triphosphate nucleotidohydrolase (179 aa).

Substrate-binding positions include 90-92, asparagine 103, 107-109, and lysine 117; these read RSG and TVD.

This sequence belongs to the dUTPase family. It depends on Mg(2+) as a cofactor.

The catalysed reaction is dUTP + H2O = dUMP + diphosphate + H(+). The protein operates within pyrimidine metabolism; dUMP biosynthesis; dUMP from dCTP (dUTP route): step 2/2. This enzyme is involved in nucleotide metabolism: it produces dUMP, the immediate precursor of thymidine nucleotides and it decreases the intracellular concentration of dUTP so that uracil cannot be incorporated into DNA. This Thermobifida fusca (strain YX) protein is Deoxyuridine 5'-triphosphate nucleotidohydrolase.